Here is a 350-residue protein sequence, read N- to C-terminus: ADP-ribose pyrophosphatase, mitochondrial (350 aa).

The N-terminal 46 residues, 1–46 (MAGRSLGKAVATVSLSVALASVTVRSSGCRAIPAPRNPFPSCGFHL), are a transit peptide targeting the mitochondrion. Disordered regions lie at residues 53–77 (GSNGVKDNSHNKARTSPYPGSKVER) and 116–153 (SESSFSPRFNEKDGHVERKSQNGLYEIENGRPRNPAGR). Phosphoserine is present on Ser-121. Positions 124–135 (FNEKDGHVERKS) are enriched in basic and acidic residues. The Nudix hydrolase domain maps to 178 to 334 (WKRDESGNKI…SQFIKLVAEK (157 aa)). The short motif at 215–237 (GMVDPGEKISATLKREFGEEALN) is the Nudix box element.

Belongs to the Nudix hydrolase family. NudF subfamily. In terms of assembly, monomer. Interacts with GLOD4. The cofactor is Mg(2+). Mn(2+) is required as a cofactor.

The protein localises to the mitochondrion. It carries out the reaction ADP-D-ribose + H2O = D-ribose 5-phosphate + AMP + 2 H(+). Hydrolyzes ADP-ribose (ADPR) to AMP and ribose 5'-phosphate. The chain is ADP-ribose pyrophosphatase, mitochondrial (Nudt9) from Rattus norvegicus (Rat).